Consider the following 171-residue polypeptide: Shikimate kinase (171 aa).

14–19 is an ATP binding site; that stretch reads GAGKST. Residue Ser18 participates in Mg(2+) binding. 3 residues coordinate substrate: Asp36, Arg60, and Gly82. Arg120 lines the ATP pocket. Residue Arg139 coordinates substrate. Position 156 (Gln156) interacts with ATP.

It belongs to the shikimate kinase family. In terms of assembly, monomer. Mg(2+) is required as a cofactor.

It localises to the cytoplasm. It catalyses the reaction shikimate + ATP = 3-phosphoshikimate + ADP + H(+). It functions in the pathway metabolic intermediate biosynthesis; chorismate biosynthesis; chorismate from D-erythrose 4-phosphate and phosphoenolpyruvate: step 5/7. Its function is as follows. Catalyzes the specific phosphorylation of the 3-hydroxyl group of shikimic acid using ATP as a cosubstrate. The protein is Shikimate kinase of Shewanella denitrificans (strain OS217 / ATCC BAA-1090 / DSM 15013).